A 269-amino-acid polypeptide reads, in one-letter code: 3-methyl-2-oxobutanoate hydroxymethyltransferase (269 aa).

Mg(2+)-binding residues include aspartate 50 and aspartate 89. 3-methyl-2-oxobutanoate is bound by residues 50–51 (DS), aspartate 89, and lysine 118. Glutamate 120 provides a ligand contact to Mg(2+). Glutamate 187 serves as the catalytic Proton acceptor.

The protein belongs to the PanB family. In terms of assembly, homodecamer; pentamer of dimers. The cofactor is Mg(2+).

The protein localises to the cytoplasm. It carries out the reaction 3-methyl-2-oxobutanoate + (6R)-5,10-methylene-5,6,7,8-tetrahydrofolate + H2O = 2-dehydropantoate + (6S)-5,6,7,8-tetrahydrofolate. It participates in cofactor biosynthesis; (R)-pantothenate biosynthesis; (R)-pantoate from 3-methyl-2-oxobutanoate: step 1/2. Its function is as follows. Catalyzes the reversible reaction in which hydroxymethyl group from 5,10-methylenetetrahydrofolate is transferred onto alpha-ketoisovalerate to form ketopantoate. The polypeptide is 3-methyl-2-oxobutanoate hydroxymethyltransferase (Nitrosomonas europaea (strain ATCC 19718 / CIP 103999 / KCTC 2705 / NBRC 14298)).